Reading from the N-terminus, the 134-residue chain is MSWQTYVDDHLMADIEGQQGNHLAAAAILGNDGSVWAQSTTFPKFKPEEITNIMKDFDEPGHLAPTGLFLGGAKYMVIQGEPGAVIRGKKGSGGITIKKTNQALIFGIYEEPVTPGQCNMVVEKIGDYLVDQGY.

At threonine 114 the chain carries Phosphothreonine.

The protein belongs to the profilin family. In terms of assembly, occurs in many kinds of cells as a complex with monomeric actin in a 1:1 ratio. Phosphorylated by MAP kinases.

The protein resides in the cytoplasm. It is found in the cytoskeleton. Binds to actin and affects the structure of the cytoskeleton. At high concentrations, profilin prevents the polymerization of actin, whereas it enhances it at low concentrations. By binding to PIP2, it inhibits the formation of IP3 and DG. The protein is Profilin-2 (PRO2) of Nicotiana tabacum (Common tobacco).